The primary structure comprises 273 residues: MAKGTVGLFDSGVGGLTVVREVSVILPGKRVIYFGDTAHVPYGDKSVDELLSYAERIIGFLCSQGADYIIFACNTSSAVSLRLMRDRFQVPMIGLIEPGAAEAVRLSATGRIGLIATEATVKAGAYARAVSALNRNCQVFSQAAPRLVPLVESGESDTPKAEQAVREYLEPLREQGIDTLILGCTHYPFLRDVIERVLGPEVVLVDPAAATVRAARLDMLRRGFSADNPGAQGEQDTVSLRYFVSGSADAFRAVAGQFLGREPEPVTEICLLR.

Substrate is bound by residues 10-11 (DS) and 42-43 (YG). The active-site Proton donor/acceptor is the C73. 74–75 (NT) is a substrate binding site. The active-site Proton donor/acceptor is the C184. Residue 185-186 (TH) participates in substrate binding.

This sequence belongs to the aspartate/glutamate racemases family.

It carries out the reaction L-glutamate = D-glutamate. It functions in the pathway cell wall biogenesis; peptidoglycan biosynthesis. Provides the (R)-glutamate required for cell wall biosynthesis. The protein is Glutamate racemase of Desulforudis audaxviator (strain MP104C).